A 361-amino-acid chain; its full sequence is 4-oxalomesaconate tautomerase (361 aa).

This sequence belongs to the PrpF family.

The catalysed reaction is (1E)-4-oxobut-1-ene-1,2,4-tricarboxylate = 4-carboxy-2-hydroxy-cis,cis-muconate. In terms of biological role, catalyzes the tautomerization of the 4-oxalomesaconic acid keto (OMAketo) generated by GalA dioxygenase to 4-oxalomesaconic acid enol (OMAenol). Mediates the second step in gallate degradation pathway. The sequence is that of 4-oxalomesaconate tautomerase (galD) from Pseudomonas putida (strain ATCC 47054 / DSM 6125 / CFBP 8728 / NCIMB 11950 / KT2440).